The following is a 325-amino-acid chain: MNTSIRINCSKSYDDFVEASKFVGFCLYLIPGAILHVLILRILLIKQRKVFRNNSFFRIFATDSVVSLVLIFWGIFFNRLFMFIPPLCPLVSPLFFEPSLFLKMYYWMYNHARMSKSVAQILMVLNRMCCVISPIGYEKIWNKLAVTTVFVVLALPFFGSWNLLLSRMYIFPSYGGFNASYVKYVQWASLSMFQSIFLLIALCFTIICSSVSLYKLIILPDRIKSAEKSLCFVSLFYSIAFLVVAVSQLIFVFCEVCLKNRLYLLFQFFAFDFLTVGSAVIIMLSSPQLSNFLGFSGTFYRRKASPPGSTVVKIFTSVHNNSSII.

7 helical membrane-spanning segments follow: residues 25–45 (FCLY…ILLI), 65–85 (VVSL…MFIP), 87–107 (LCPL…MYYW), 144–164 (LAVT…WNLL), 187–207 (WASL…FTII), 232–252 (FVSL…LIFV), and 264–284 (LLFQ…IIML).

Belongs to the nematode receptor-like protein srg family.

It localises to the membrane. The chain is Serpentine receptor class gamma-16 (srg-16) from Caenorhabditis elegans.